Reading from the N-terminus, the 383-residue chain is Pantothenate kinase 1 (383 aa).

It belongs to the type II pantothenate kinase family. Highly expressed in leaves and developing seeds. Expressed in roots, stems and flowers.

It carries out the reaction (R)-pantothenate + ATP = (R)-4'-phosphopantothenate + ADP + H(+). It functions in the pathway cofactor biosynthesis; coenzyme A biosynthesis; CoA from (R)-pantothenate: step 1/5. With respect to regulation, regulated by feedback inhibition by malonyl-CoA. Catalyzes the phosphorylation of pantothenate the first step in CoA biosynthesis. May play a role in the physiological regulation of the intracellular CoA concentration. Functionally redudant with PANK2. The protein is Pantothenate kinase 1 (PANK1) of Arabidopsis thaliana (Mouse-ear cress).